The sequence spans 518 residues: uncharacterized protein (518 aa).

It belongs to the MG032/MG096/MG288 family.

This is an uncharacterized protein from Mycoplasma pneumoniae (strain ATCC 29342 / M129 / Subtype 1) (Mycoplasmoides pneumoniae).